The following is an 874-amino-acid chain: Alanine--tRNA ligase (874 aa).

4 residues coordinate Zn(2+): histidine 563, histidine 567, cysteine 665, and histidine 669.

It belongs to the class-II aminoacyl-tRNA synthetase family. It depends on Zn(2+) as a cofactor.

The protein resides in the cytoplasm. The enzyme catalyses tRNA(Ala) + L-alanine + ATP = L-alanyl-tRNA(Ala) + AMP + diphosphate. Functionally, catalyzes the attachment of alanine to tRNA(Ala) in a two-step reaction: alanine is first activated by ATP to form Ala-AMP and then transferred to the acceptor end of tRNA(Ala). Also edits incorrectly charged Ser-tRNA(Ala) and Gly-tRNA(Ala) via its editing domain. The protein is Alanine--tRNA ligase of Haemophilus influenzae (strain ATCC 51907 / DSM 11121 / KW20 / Rd).